We begin with the raw amino-acid sequence, 329 residues long: Malate dehydrogenase (329 aa).

12–18 (GAAGQIG) contacts NAD(+). Arginine 95 and arginine 101 together coordinate substrate. NAD(+) is bound by residues asparagine 108, glutamine 115, and 132–134 (VGN). Residues asparagine 134 and arginine 165 each coordinate substrate. Histidine 190 (proton acceptor) is an active-site residue.

This sequence belongs to the LDH/MDH superfamily. MDH type 2 family.

The enzyme catalyses (S)-malate + NAD(+) = oxaloacetate + NADH + H(+). In terms of biological role, catalyzes the reversible oxidation of malate to oxaloacetate. This is Malate dehydrogenase from Herminiimonas arsenicoxydans.